Consider the following 299-residue polypeptide: Ribosomal protein L11 methyltransferase (299 aa).

S-adenosyl-L-methionine is bound by residues Thr-139, Gly-166, Asp-188, and Asn-231.

It belongs to the methyltransferase superfamily. PrmA family.

Its subcellular location is the cytoplasm. It carries out the reaction L-lysyl-[protein] + 3 S-adenosyl-L-methionine = N(6),N(6),N(6)-trimethyl-L-lysyl-[protein] + 3 S-adenosyl-L-homocysteine + 3 H(+). Functionally, methylates ribosomal protein L11. This is Ribosomal protein L11 methyltransferase from Thermosynechococcus vestitus (strain NIES-2133 / IAM M-273 / BP-1).